We begin with the raw amino-acid sequence, 252 residues long: Chitooligosaccharide deacetylase (252 aa).

Mg(2+) is bound by residues histidine 61 and histidine 125.

This sequence belongs to the YdjC deacetylase family. ChbG subfamily. As to quaternary structure, homodimer. Mg(2+) is required as a cofactor.

The protein localises to the cytoplasm. It catalyses the reaction N,N'-diacetylchitobiose + H2O = N-acetyl-beta-D-glucosaminyl-(1-&gt;4)-D-glucosamine + acetate. The catalysed reaction is diacetylchitobiose-6'-phosphate + H2O = N'-monoacetylchitobiose-6'-phosphate + acetate. Its pathway is glycan degradation; chitin degradation. Functionally, involved in the degradation of chitin. ChbG is essential for growth on the acetylated chitooligosaccharides chitobiose and chitotriose but is dispensable for growth on cellobiose and chitosan dimer, the deacetylated form of chitobiose. Deacetylation of chitobiose-6-P and chitotriose-6-P is necessary for both the activation of the chb promoter by the regulatory protein ChbR and the hydrolysis of phosphorylated beta-glucosides by the phospho-beta-glucosidase ChbF. Catalyzes the removal of only one acetyl group from chitobiose-6-P to yield monoacetylchitobiose-6-P, the inducer of ChbR and the substrate of ChbF. The chain is Chitooligosaccharide deacetylase from Enterobacter sp. (strain 638).